Here is a 69-residue protein sequence, read N- to C-terminus: Large ribosomal subunit protein bL31 (69 aa).

Zn(2+) is bound by residues Cys16, Cys18, Cys36, and Cys39.

It belongs to the bacterial ribosomal protein bL31 family. Type A subfamily. In terms of assembly, part of the 50S ribosomal subunit. Zn(2+) serves as cofactor.

In terms of biological role, binds the 23S rRNA. In Thermosipho africanus (strain TCF52B), this protein is Large ribosomal subunit protein bL31.